A 1050-amino-acid polypeptide reads, in one-letter code: NAD-specific glutamate dehydrogenase (1050 aa).

Residues 1–39 (MDSPSAPVPAHKLVDRLKDQTPRHPSPQPTHVSYPKVNG) are disordered. A compositionally biased stretch (basic and acidic residues) spans 12–22 (KLVDRLKDQTP). The active site involves Lys594.

It belongs to the Glu/Leu/Phe/Val dehydrogenases family. As to quaternary structure, homotetramer.

It catalyses the reaction L-glutamate + NAD(+) + H2O = 2-oxoglutarate + NH4(+) + NADH + H(+). This Neurospora crassa (strain ATCC 24698 / 74-OR23-1A / CBS 708.71 / DSM 1257 / FGSC 987) protein is NAD-specific glutamate dehydrogenase (gdh-1).